A 456-amino-acid polypeptide reads, in one-letter code: Bifunctional protein GlmU (456 aa).

Residues 1–230 (MDKRFAVVLA…FQETLGVNDR (230 aa)) are pyrophosphorylase. Residues 9 to 12 (LAAG), lysine 23, glutamine 73, and 78 to 79 (GT) contribute to the UDP-N-acetyl-alpha-D-glucosamine site. Aspartate 103 is a Mg(2+) binding site. UDP-N-acetyl-alpha-D-glucosamine contacts are provided by glycine 140, glutamate 155, asparagine 170, and asparagine 228. Position 228 (asparagine 228) interacts with Mg(2+). The tract at residues 231 to 251 (VALSQAEQFMKERINKRHMQN) is linker. The segment at 252–456 (GVTLIDPMNT…DDYVKNIHKK (205 aa)) is N-acetyltransferase. UDP-N-acetyl-alpha-D-glucosamine contacts are provided by arginine 333 and lysine 351. Histidine 363 serves as the catalytic Proton acceptor. 2 residues coordinate UDP-N-acetyl-alpha-D-glucosamine: tyrosine 366 and asparagine 377. Acetyl-CoA contacts are provided by residues 386–387 (NY), alanine 423, and arginine 440.

The protein in the N-terminal section; belongs to the N-acetylglucosamine-1-phosphate uridyltransferase family. It in the C-terminal section; belongs to the transferase hexapeptide repeat family. In terms of assembly, homotrimer. Mg(2+) serves as cofactor.

The protein resides in the cytoplasm. The catalysed reaction is alpha-D-glucosamine 1-phosphate + acetyl-CoA = N-acetyl-alpha-D-glucosamine 1-phosphate + CoA + H(+). The enzyme catalyses N-acetyl-alpha-D-glucosamine 1-phosphate + UTP + H(+) = UDP-N-acetyl-alpha-D-glucosamine + diphosphate. Its pathway is nucleotide-sugar biosynthesis; UDP-N-acetyl-alpha-D-glucosamine biosynthesis; N-acetyl-alpha-D-glucosamine 1-phosphate from alpha-D-glucosamine 6-phosphate (route II): step 2/2. The protein operates within nucleotide-sugar biosynthesis; UDP-N-acetyl-alpha-D-glucosamine biosynthesis; UDP-N-acetyl-alpha-D-glucosamine from N-acetyl-alpha-D-glucosamine 1-phosphate: step 1/1. It functions in the pathway bacterial outer membrane biogenesis; LPS lipid A biosynthesis. Its function is as follows. Catalyzes the last two sequential reactions in the de novo biosynthetic pathway for UDP-N-acetylglucosamine (UDP-GlcNAc). The C-terminal domain catalyzes the transfer of acetyl group from acetyl coenzyme A to glucosamine-1-phosphate (GlcN-1-P) to produce N-acetylglucosamine-1-phosphate (GlcNAc-1-P), which is converted into UDP-GlcNAc by the transfer of uridine 5-monophosphate (from uridine 5-triphosphate), a reaction catalyzed by the N-terminal domain. This Bacillus subtilis (strain 168) protein is Bifunctional protein GlmU.